The following is a 339-amino-acid chain: Ribosomal RNA small subunit methyltransferase C (339 aa).

It belongs to the methyltransferase superfamily. RsmC family. As to quaternary structure, monomer.

It localises to the cytoplasm. The enzyme catalyses guanosine(1207) in 16S rRNA + S-adenosyl-L-methionine = N(2)-methylguanosine(1207) in 16S rRNA + S-adenosyl-L-homocysteine + H(+). Its function is as follows. Specifically methylates the guanine in position 1207 of 16S rRNA in the 30S particle. The polypeptide is Ribosomal RNA small subunit methyltransferase C (Aliivibrio fischeri (strain ATCC 700601 / ES114) (Vibrio fischeri)).